The chain runs to 172 residues: Lipoprotein signal peptidase (172 aa).

The next 4 helical transmembrane spans lie at 4 to 24 (LSSS…LDQV), 39 to 59 (VAIL…AFSF), 69 to 89 (WFFT…LAKL), and 93 to 113 (WTLE…NVID). Active-site residues include D122 and D140. A helical transmembrane segment spans residues 136–156 (FNVADMGISIGAVLLIISEFW).

It belongs to the peptidase A8 family.

The protein localises to the cell inner membrane. The enzyme catalyses Release of signal peptides from bacterial membrane prolipoproteins. Hydrolyzes -Xaa-Yaa-Zaa-|-(S,diacylglyceryl)Cys-, in which Xaa is hydrophobic (preferably Leu), and Yaa (Ala or Ser) and Zaa (Gly or Ala) have small, neutral side chains.. It participates in protein modification; lipoprotein biosynthesis (signal peptide cleavage). Its function is as follows. This protein specifically catalyzes the removal of signal peptides from prolipoproteins. This chain is Lipoprotein signal peptidase, found in Hydrogenovibrio crunogenus (strain DSM 25203 / XCL-2) (Thiomicrospira crunogena).